The primary structure comprises 148 residues: Dermatopontin (148 aa).

A disulfide bridge links Cys-14 with Cys-40. Asn-44 carries an N-linked (GlcNAc...) asparagine glycan. 2 disulfides stabilise this stretch: Cys-66–Cys-93 and Cys-103–Cys-147.

Belongs to the dermatopontin family. Post-translationally, the terminal mannose residues of the polysaccharide are 3-O-methylated. No tyrosine sulfation was detected.

It is found in the secreted. It localises to the extracellular space. The protein localises to the extracellular matrix. Functionally, seems to mediate adhesion by cell surface integrin binding. This is Dermatopontin from Biomphalaria glabrata (Bloodfluke planorb).